Consider the following 141-residue polypeptide: Hemoglobin subunit alpha (141 aa).

Positions 1–141 (VLSEEDKSHV…VSAMLTSKYR (141 aa)) constitute a Globin domain. Histidine 58 lines the O2 pocket. Residue histidine 87 participates in heme b binding.

It belongs to the globin family. In terms of assembly, heterotetramer of two alpha chains and two beta chains. Red blood cells.

Involved in oxygen transport from the lung to the various peripheral tissues. This is Hemoglobin subunit alpha (HBA) from Caiman crocodilus (Spectacled caiman).